Reading from the N-terminus, the 137-residue chain is Ribosome-binding factor A (137 aa).

This sequence belongs to the RbfA family. Monomer. Binds 30S ribosomal subunits, but not 50S ribosomal subunits or 70S ribosomes.

It is found in the cytoplasm. Its function is as follows. One of several proteins that assist in the late maturation steps of the functional core of the 30S ribosomal subunit. Associates with free 30S ribosomal subunits (but not with 30S subunits that are part of 70S ribosomes or polysomes). Required for efficient processing of 16S rRNA. May interact with the 5'-terminal helix region of 16S rRNA. The sequence is that of Ribosome-binding factor A from Nitrobacter winogradskyi (strain ATCC 25391 / DSM 10237 / CIP 104748 / NCIMB 11846 / Nb-255).